Here is a 413-residue protein sequence, read N- to C-terminus: F-box protein CPR1 (413 aa).

The region spanning 1–48 (MATIPMDIVNDIFLRLPAKTLVRCRALSKPCYHLINDPDFIESHLHRV) is the F-box domain.

As to quaternary structure, part of a SCF (ASK-cullin-F-box) protein ligase complex. Interacts with SKP1A/ASK1, SPK1B/ASK2, ASK9, ASK10, ASK11, ASK13, ASK14, ASK16, ASK17, ASK18 and ASK19. Interacts with TRAF1B. Expressed in seedling, root, stem, leaves, inflorescence and silique, especially in veins and trichomes.

Its subcellular location is the cytoplasm. The protein localises to the nucleus. Its pathway is protein modification; protein ubiquitination. Functionally, component of SCF(ASK-cullin-F-box) E3 ubiquitin ligase complexes, which may mediate the ubiquitination and subsequent proteasomal degradation of target proteins. Regulates negatively both salicylic acid (SA)-dependent and SA-independent defense signaling. The protein is F-box protein CPR1 (CPR1) of Arabidopsis thaliana (Mouse-ear cress).